Consider the following 376-residue polypeptide: DNA replication and repair protein RecF (376 aa).

30-37 (GNNAQGKS) contacts ATP.

It belongs to the RecF family.

Its subcellular location is the cytoplasm. In terms of biological role, the RecF protein is involved in DNA metabolism; it is required for DNA replication and normal SOS inducibility. RecF binds preferentially to single-stranded, linear DNA. It also seems to bind ATP. The protein is DNA replication and repair protein RecF of Trichormus variabilis (strain ATCC 29413 / PCC 7937) (Anabaena variabilis).